Here is a 334-residue protein sequence, read N- to C-terminus: Sensor protein BceS (334 aa).

Over 1–12 (MIKAFLIERRSW) the chain is Cytoplasmic. The chain crosses the membrane as a helical span at residues 13-33 (IAAFLFQQALMLFIAFVDPSI). Serine 34 is a topological domain (extracellular). Residues 35-55 (FGNVLYMVYLCILFFIIFLWF) traverse the membrane as a helical segment. The Cytoplasmic portion of the chain corresponds to 56–334 (RYRKETAFYK…RNQFEHVISV (279 aa)). A Histidine kinase domain is found at 121–326 (AWIHEVKTPL…VFTLTFPIRN (206 aa)). Histidine 124 is subject to Phosphohistidine; by autocatalysis.

The protein localises to the cell membrane. The catalysed reaction is ATP + protein L-histidine = ADP + protein N-phospho-L-histidine.. Functionally, member of the two-component regulatory system BceS/BceR involved in the regulation of bacitracin resistance. Activates BceR in response to extracellular bacitracin. This chain is Sensor protein BceS (bceS), found in Bacillus subtilis (strain 168).